The primary structure comprises 512 residues: D-alanine--D-alanyl carrier protein ligase (512 aa).

152 to 153 (TS) is a binding site for ATP. Asp-199 lines the D-alanine pocket. 294–299 (NAYGPT) lines the ATP pocket. Position 303 (Val-303) interacts with D-alanine. ATP is bound by residues Asp-385, 397–400 (YGGR), and Lys-499. Residue Lys-499 coordinates D-alanine.

Belongs to the ATP-dependent AMP-binding enzyme family. DltA subfamily.

The protein localises to the cytoplasm. The catalysed reaction is holo-[D-alanyl-carrier protein] + D-alanine + ATP = D-alanyl-[D-alanyl-carrier protein] + AMP + diphosphate. It participates in cell wall biogenesis; lipoteichoic acid biosynthesis. In terms of biological role, catalyzes the first step in the D-alanylation of lipoteichoic acid (LTA), the activation of D-alanine and its transfer onto the D-alanyl carrier protein (Dcp) DltC. In an ATP-dependent two-step reaction, forms a high energy D-alanyl-AMP intermediate, followed by transfer of the D-alanyl residue as a thiol ester to the phosphopantheinyl prosthetic group of the Dcp. D-alanylation of LTA plays an important role in modulating the properties of the cell wall in Gram-positive bacteria, influencing the net charge of the cell wall. The protein is D-alanine--D-alanyl carrier protein ligase of Streptococcus pyogenes serotype M1.